Here is a 284-residue protein sequence, read N- to C-terminus: Tropomyosin (284 aa).

At Met-1 the chain carries N-acetylmethionine. Positions Met-1–Glu-42 are disordered. Positions Met-1–Tyr-284 form a coiled coil. The segment covering Lys-12–Lys-38 has biased composition (basic and acidic residues).

This sequence belongs to the tropomyosin family. As to quaternary structure, homodimer.

In terms of biological role, tropomyosin, in association with the troponin complex, plays a central role in the calcium dependent regulation of muscle contraction. The sequence is that of Tropomyosin from Pandalus borealis (Northern red shrimp).